The following is a 113-amino-acid chain: MKITMLFAALSAASGAFAAPAQAVAAAKDLSIGAGVGIGIGAGVGPYGYPYGAYPGWRLQLLPLRWLSLQWIPLRIPILPMVNTWCSVACAQNPSPAHLHTFKPFTSEQFLFL.

A signal peptide spans 1-18 (MKITMLFAALSAASGAFA). 6 consecutive repeat copies span residues 32-37 (IGAGVG), 40-45 (IGAGVG), 46-49 (PYGY), 50-53 (PYGA), 59-65 (LQLLPLR), and 69-75 (LQWIPLR). The segment at 32–45 (IGAGVGIGIGAGVG) is 2 X 6 AA repeats. Positions 46 to 53 (PYGYPYGA) are 2 X 4 AA approximate tandem repeats. The segment at 59–75 (LQLLPLRWLSLQWIPLR) is 2 X 7 AA approximate repeats.

The protein resides in the secreted. This Puccinia graminis (Black stem rust fungus) protein is Protein USP1 (USP1).